Reading from the N-terminus, the 226-residue chain is Cytidylate kinase (226 aa).

10-18 contacts ATP; the sequence is GPASSGKST.

The protein belongs to the cytidylate kinase family. Type 1 subfamily.

It is found in the cytoplasm. The catalysed reaction is CMP + ATP = CDP + ADP. It carries out the reaction dCMP + ATP = dCDP + ADP. The sequence is that of Cytidylate kinase from Streptococcus pyogenes serotype M28 (strain MGAS6180).